A 166-amino-acid chain; its full sequence is Bud site selection protein 20 (166 aa).

The Nuclear localization signal signature appears at 7 to 16; sequence KRYKTKRRTR. The interval 17-31 is nuclear export signal-like (NES-like); sequence DLDLIYNDLSTKESV. The C2H2-type zinc-finger motif lies at 49–73; sequence HYCIHCAKYMETAIALKTHLKGKVH.

The protein belongs to the ZNF593/BUD20 C2H2-type zinc-finger protein family. In terms of assembly, associates with pre-60S ribosomal particles; released from the pre-60S particle very early in the cytoplasm.

It is found in the nucleus. Its subcellular location is the cytoplasm. Its function is as follows. Involved in pre-60S ribosomal particles maturation by promoting the nuclear export of the 60S ribosome. Involved in positioning the proximal bud pole signal. This is Bud site selection protein 20 from Saccharomyces cerevisiae (strain ATCC 204508 / S288c) (Baker's yeast).